Reading from the N-terminus, the 379-residue chain is MSAGNGTPWGSAVGEEAWAGSGVAVEGSELPTFSTAAKVRVGVTIVLFVSSAGGNLAVLWSVTRPQPSQLRPSPVRTLFAHLAAADLLVTFVVMPLDATWNITVQWLAGDIACRTLMFLKLMAMYSAAFLPVVIGLDRQAAVLNPLGSRSGVRKLLGAAWGLSFLLALPQLFLFHTVHRAGPVPFTQCVTKGSFKARWQETTYNLFTFCCLFLLPLIAMAICYSRIVLSVSSPQTRKGSHAPAGEFALRRSFDNRPRVCLRALRLALLILLTFILCWTPYYLLGLWYWFSPTMLTEVPPSLSHILFLFGLLNAPLDPLLYGAFTFGCRRGHQELSIDSSKEGSGRMLQQEIHALRQQEVQKTVTSRSAGETKGISITSI.

Residues 1 to 40 (MSAGNGTPWGSAVGEEAWAGSGVAVEGSELPTFSTAAKVR) lie on the Extracellular side of the membrane. The helical transmembrane segment at 41–60 (VGVTIVLFVSSAGGNLAVLW) threads the bilayer. Topologically, residues 61–76 (SVTRPQPSQLRPSPVR) are cytoplasmic. Residues 77 to 96 (TLFAHLAAADLLVTFVVMPL) form a helical membrane-spanning segment. Over 97–114 (DATWNITVQWLAGDIACR) the chain is Extracellular. Asn101 is a glycosylation site (N-linked (GlcNAc...) asparagine). Cysteines 113 and 188 form a disulfide. The chain crosses the membrane as a helical span at residues 115 to 136 (TLMFLKLMAMYSAAFLPVVIGL). Over 137-160 (DRQAAVLNPLGSRSGVRKLLGAAW) the chain is Cytoplasmic. The chain crosses the membrane as a helical span at residues 161–178 (GLSFLLALPQLFLFHTVH). At 179-204 (RAGPVPFTQCVTKGSFKARWQETTYN) the chain is on the extracellular side. The helical transmembrane segment at 205–224 (LFTFCCLFLLPLIAMAICYS) threads the bilayer. Residues 225 to 278 (RIVLSVSSPQTRKGSHAPAGEFALRRSFDNRPRVCLRALRLALLILLTFILCWT) lie on the Cytoplasmic side of the membrane. Residues 279–297 (PYYLLGLWYWFSPTMLTEV) form a helical membrane-spanning segment. Residues 298–303 (PPSLSH) are Extracellular-facing. Residues 304 to 323 (ILFLFGLLNAPLDPLLYGAF) form a helical membrane-spanning segment. Over 324–379 (TFGCRRGHQELSIDSSKEGSGRMLQQEIHALRQQEVQKTVTSRSAGETKGISITSI) the chain is Cytoplasmic.

This sequence belongs to the G-protein coupled receptor 1 family. Post-translationally, phosphorylated on the C-terminal cytoplasmic tail.

The protein resides in the cell membrane. Receptor for gonadotropin releasing hormone II (GnRH II). This receptor mediates its action by association with G proteins that activate a phosphatidylinositol-calcium second messenger system. The protein is Gonadotropin-releasing hormone II receptor (GNRHR2) of Chlorocebus aethiops (Green monkey).